We begin with the raw amino-acid sequence, 365 residues long: uncharacterized protein (365 aa).

This sequence belongs to the NAD(P)-dependent epimerase/dehydratase family.

The protein localises to the cytoplasm. The protein resides in the nucleus. This is an uncharacterized protein from Schizosaccharomyces pombe (strain 972 / ATCC 24843) (Fission yeast).